The chain runs to 305 residues: Homoserine O-acetyltransferase (305 aa).

The Acyl-thioester intermediate role is filled by Cys142. Substrate contacts are provided by Lys163 and Ser192. His235 functions as the Proton acceptor in the catalytic mechanism. Glu237 is a catalytic residue. Arg249 lines the substrate pocket.

Belongs to the MetA family.

It localises to the cytoplasm. The catalysed reaction is L-homoserine + acetyl-CoA = O-acetyl-L-homoserine + CoA. The protein operates within amino-acid biosynthesis; L-methionine biosynthesis via de novo pathway; O-acetyl-L-homoserine from L-homoserine: step 1/1. Its function is as follows. Transfers an acetyl group from acetyl-CoA to L-homoserine, forming acetyl-L-homoserine. This is Homoserine O-acetyltransferase from Phocaeicola vulgatus (strain ATCC 8482 / DSM 1447 / JCM 5826 / CCUG 4940 / NBRC 14291 / NCTC 11154) (Bacteroides vulgatus).